We begin with the raw amino-acid sequence, 1155 residues long: DNA-directed RNA polymerase subunit beta (1155 aa).

This sequence belongs to the RNA polymerase beta chain family. The RNAP catalytic core consists of 2 alpha, 1 beta, 1 beta' and 1 omega subunit. When a sigma factor is associated with the core the holoenzyme is formed, which can initiate transcription.

It catalyses the reaction RNA(n) + a ribonucleoside 5'-triphosphate = RNA(n+1) + diphosphate. Functionally, DNA-dependent RNA polymerase catalyzes the transcription of DNA into RNA using the four ribonucleoside triphosphates as substrates. The polypeptide is DNA-directed RNA polymerase subunit beta (Borreliella burgdorferi (strain ZS7) (Borrelia burgdorferi)).